The sequence spans 367 residues: o-succinylbenzoate synthase (367 aa).

Lys164 acts as the Proton donor in catalysis. The Mg(2+) site is built by Asp189, Glu214, and Asp239. The active-site Proton acceptor is the Lys263.

It belongs to the mandelate racemase/muconate lactonizing enzyme family. MenC type 2 subfamily. As to quaternary structure, homodimer. A divalent metal cation is required as a cofactor.

The enzyme catalyses (1R,6R)-6-hydroxy-2-succinyl-cyclohexa-2,4-diene-1-carboxylate = 2-succinylbenzoate + H2O. Its pathway is quinol/quinone metabolism; 1,4-dihydroxy-2-naphthoate biosynthesis; 1,4-dihydroxy-2-naphthoate from chorismate: step 4/7. It participates in quinol/quinone metabolism; menaquinone biosynthesis. Functionally, converts 2-succinyl-6-hydroxy-2,4-cyclohexadiene-1-carboxylate (SHCHC) to 2-succinylbenzoate (OSB). Also acts as a N-succinylamino acid racemase (NSAR) that catalyzes the racemization of N-succinyl-L-phenylglycine. Since the gene is encoded in a menaquinone synthesis operon, OSB synthase is probably the physiological activity. A pathway that requires NSAR activity has not been identified in this species, so whether NSAR is also a biological activity is unknown. The protein is o-succinylbenzoate synthase of Enterococcus faecalis (strain ATCC 700802 / V583).